The primary structure comprises 1919 residues: Protein TIC 214 (1919 aa).

6 helical membrane passes run 18–38, 67–87, 90–110, 127–147, 175–195, and 224–244; these read IINSVVVVGLYYGFLTTFSIG, FITGQLMMFISIYYAPLHLAL, PHTITVLALPYLLFHFFWNNH, LSIQCVFLNNLIFQLFNHFIL, VGWLIGHILFMKWVGLVLVWI, and IFSILLFITCVYYLGRIPSPI. 3 disordered regions span residues 250–375, 1107–1129, and 1606–1636; these read KETP…GKEK, IKSITKEKKKGTPGIKSSPNKRS, and ELKNRNQEEKEPADRGDLGSDAQNQGNRRFV. Composition is skewed to acidic residues over residues 259–269, 278–288, 297–307, 316–328, and 355–366; these read GESEEETDVEI, GESEEETDVEIET, and EKEDPDKIDETE. Positions 1107-1117 are enriched in basic residues; the sequence is IKSITKEKKKG. Residues 1606–1623 show a composition bias toward basic and acidic residues; sequence ELKNRNQEEKEPADRGDL. Residues 1626-1636 show a composition bias toward polar residues; sequence DAQNQGNRRFV.

The protein belongs to the TIC214 family. As to quaternary structure, part of the Tic complex.

The protein resides in the plastid. It localises to the chloroplast inner membrane. Its function is as follows. Involved in protein precursor import into chloroplasts. May be part of an intermediate translocation complex acting as a protein-conducting channel at the inner envelope. This Panax ginseng (Korean ginseng) protein is Protein TIC 214.